Consider the following 159-residue polypeptide: Immunoglobulin J chain (159 aa).

An N-terminal signal peptide occupies residues 1–21 (MKTHLLLWGVLAIFVKAVLVT). Disulfide bonds link Cys-34-Cys-123, Cys-93-Cys-113, and Cys-131-Cys-156. Asn-70 carries an N-linked (GlcNAc...) (complex) asparagine glycan.

In terms of assembly, part of the secretory IgA (sIgA) complex that consists of two, four or five IgA monomers, and two additional non-Ig polypeptides, namely the JCHAIN and the secretory component (the proteolytic product of PIGR). Part of the secretory IgM (sIgM) complex that consist of five IgM monomers, and two additional non-Ig polypeptides, namely the JCHAIN and the secretory component (the proteolytic product of PIGR). JCHAIN-containing IgM interacts (via CH4 domain) with FCRM (via Ig-like domain).

It is found in the secreted. Functionally, serves to link two monomer units of either IgM or IgA. In the case of IgM, the J chain-joined dimer is a nucleating unit for the IgM pentamer, and in the case of IgA it induces dimers and/or larger polymers. It also helps to bind these immunoglobulins to secretory component. This chain is Immunoglobulin J chain, found in Mus musculus (Mouse).